A 488-amino-acid chain; its full sequence is 3-octaprenyl-4-hydroxybenzoate carboxy-lyase (488 aa).

A Mn(2+)-binding site is contributed by Asn-172. Residues 175 to 177 (IYR), 189 to 191 (RWL), and 194 to 195 (RG) contribute to the prenylated FMN site. Glu-238 is a Mn(2+) binding site. Residue Asp-287 is the Proton donor of the active site.

The protein belongs to the UbiD family. Homohexamer. The cofactor is prenylated FMN. It depends on Mn(2+) as a cofactor.

It localises to the cell membrane. It catalyses the reaction a 4-hydroxy-3-(all-trans-polyprenyl)benzoate + H(+) = a 2-(all-trans-polyprenyl)phenol + CO2. The protein operates within cofactor biosynthesis; ubiquinone biosynthesis. In terms of biological role, catalyzes the decarboxylation of 3-octaprenyl-4-hydroxy benzoate to 2-octaprenylphenol, an intermediate step in ubiquinone biosynthesis. The protein is 3-octaprenyl-4-hydroxybenzoate carboxy-lyase of Pseudomonas savastanoi pv. phaseolicola (strain 1448A / Race 6) (Pseudomonas syringae pv. phaseolicola (strain 1448A / Race 6)).